The primary structure comprises 202 residues: LexA repressor (202 aa).

The H-T-H motif DNA-binding region spans 28–48 (RAEIAQRLGFRSPNAAEEHLK). Active-site for autocatalytic cleavage activity residues include Ser119 and Lys156.

This sequence belongs to the peptidase S24 family. In terms of assembly, homodimer.

It catalyses the reaction Hydrolysis of Ala-|-Gly bond in repressor LexA.. Its function is as follows. Represses a number of genes involved in the response to DNA damage (SOS response), including recA and lexA. Binds to the 16 bp palindromic sequence 5'-CTGTATATATATACAG-3'. In the presence of single-stranded DNA, RecA interacts with LexA causing an autocatalytic cleavage which disrupts the DNA-binding part of LexA, leading to derepression of the SOS regulon and eventually DNA repair. In Escherichia coli (strain K12 / MC4100 / BW2952), this protein is LexA repressor.